Here is a 474-residue protein sequence, read N- to C-terminus: Alanine/serine racemase (474 aa).

Residues 139–140 and Gln-282 contribute to the pyridoxal 5'-phosphate site; that span reads GS. Lys-308 carries the N6-(pyridoxal phosphate)lysine modification. Thr-336 serves as a coordination point for pyridoxal 5'-phosphate.

It belongs to the class-III pyridoxal-phosphate-dependent aminotransferase family. As to quaternary structure, homohexamer. Pyridoxal 5'-phosphate is required as a cofactor.

The catalysed reaction is L-alanine = D-alanine. It catalyses the reaction L-serine = D-serine. Its activity is regulated as follows. Completely inhibited by hydroxylamine hydrochloride. Its function is as follows. Catalyzes the interconversion of L-alanine and D-alanine, and L-serine and D-serine. Has weak activity with valine and threonine. This Pyrococcus horikoshii (strain ATCC 700860 / DSM 12428 / JCM 9974 / NBRC 100139 / OT-3) protein is Alanine/serine racemase.